The primary structure comprises 741 residues: Transketolase, chloroplastic (741 aa).

Over residues 1–19 (MAASSSLSTLSHHQTLLSH) the composition is skewed to low complexity. The interval 1–33 (MAASSSLSTLSHHQTLLSHPKTHLPTTPASSLL) is disordered. The N-terminal 66 residues, 1–66 (MAASSSLSTL…VGSASAVVRA (66 aa)), are a transit peptide targeting the chloroplast. Residues 24–33 (LPTTPASSLL) show a composition bias toward polar residues. His-103 contributes to the substrate binding site. Residues His-143 and 192 to 194 (GPL) each bind thiamine diphosphate. Mg(2+) is bound at residue Asp-233. Gly-234 and Asn-263 together coordinate thiamine diphosphate. Mg(2+) is bound by residues Asn-263 and Ile-265. Residues His-340, Arg-434, and Ser-461 each coordinate substrate. His-340 lines the thiamine diphosphate pocket. Residues Glu-488 and Phe-515 each coordinate thiamine diphosphate. The Proton donor role is filled by Glu-488. Substrate-binding residues include His-539, Asp-547, and Arg-598.

This sequence belongs to the transketolase family. As to quaternary structure, homodimer. Requires Mg(2+) as cofactor. It depends on Ca(2+) as a cofactor. Mn(2+) is required as a cofactor. Co(2+) serves as cofactor. The cofactor is thiamine diphosphate.

Its subcellular location is the plastid. It localises to the chloroplast thylakoid membrane. The catalysed reaction is D-sedoheptulose 7-phosphate + D-glyceraldehyde 3-phosphate = aldehydo-D-ribose 5-phosphate + D-xylulose 5-phosphate. It participates in carbohydrate biosynthesis; Calvin cycle. Catalyzes the reversible transfer of a two-carbon ketol group from fructose-6-phosphate or sedoheptulose-7-phosphate to glyceraldehyde-3-phosphate to yield xylulose-5-phosphate and erythrose-4-phosphate or ribose-5-phosphate, respectively. This chain is Transketolase, chloroplastic, found in Spinacia oleracea (Spinach).